We begin with the raw amino-acid sequence, 204 residues long: N-(5'-phosphoribosyl)anthranilate isomerase (204 aa).

Belongs to the TrpF family.

The enzyme catalyses N-(5-phospho-beta-D-ribosyl)anthranilate = 1-(2-carboxyphenylamino)-1-deoxy-D-ribulose 5-phosphate. It functions in the pathway amino-acid biosynthesis; L-tryptophan biosynthesis; L-tryptophan from chorismate: step 3/5. The protein is N-(5'-phosphoribosyl)anthranilate isomerase of Bacillus anthracis (strain A0248).